Reading from the N-terminus, the 376-residue chain is Chaperone protein DnaJ (376 aa).

The J domain maps to 5–69 (DYYEILGVDR…EKRARYDRFG (65 aa)). The segment at 135-217 (GLETDIRVPH…CNGKGVVRKT (83 aa)) adopts a CR-type zinc-finger fold. Residues Cys148, Cys151, Cys165, Cys168, Cys191, Cys194, Cys205, and Cys208 each contribute to the Zn(2+) site. 4 CXXCXGXG motif repeats span residues 148-155 (CPVCHGSR), 165-172 (CQTCGGSG), 191-198 (CPDCQGEG), and 205-212 (CSNCNGKG).

This sequence belongs to the DnaJ family. Homodimer. Zn(2+) is required as a cofactor.

The protein localises to the cytoplasm. Participates actively in the response to hyperosmotic and heat shock by preventing the aggregation of stress-denatured proteins and by disaggregating proteins, also in an autonomous, DnaK-independent fashion. Unfolded proteins bind initially to DnaJ; upon interaction with the DnaJ-bound protein, DnaK hydrolyzes its bound ATP, resulting in the formation of a stable complex. GrpE releases ADP from DnaK; ATP binding to DnaK triggers the release of the substrate protein, thus completing the reaction cycle. Several rounds of ATP-dependent interactions between DnaJ, DnaK and GrpE are required for fully efficient folding. Also involved, together with DnaK and GrpE, in the DNA replication of plasmids through activation of initiation proteins. This Methanothermobacter thermautotrophicus (strain ATCC 29096 / DSM 1053 / JCM 10044 / NBRC 100330 / Delta H) (Methanobacterium thermoautotrophicum) protein is Chaperone protein DnaJ.